The sequence spans 114 residues: Acetyltransferase At1g77540 (114 aa).

Thr2 carries the N-acetylthreonine modification. The 89-residue stretch at 18-106 folds into the N-acetyltransferase domain; the sequence is KIVWNEGKRR…RNPSWKPLIH (89 aa). CoA is bound by residues 52-55 and 61-66; these read HTYV and GLGLAS. The Nucleophile role is filled by Cys87. CoA is bound by residues 88–89, Thr93, and Arg97; that span reads SY.

The protein resides in the peroxisome. In terms of biological role, possesses in vitro histone acetyltransferase activity with histones H3 and H4. The sequence is that of Acetyltransferase At1g77540 from Arabidopsis thaliana (Mouse-ear cress).